Reading from the N-terminus, the 128-residue chain is Probable 4-amino-4-deoxy-L-arabinose-phosphoundecaprenol flippase subunit ArnF (128 aa).

Over 1–10 the chain is Cytoplasmic; that stretch reads MKGYLWGGAS. The helical transmembrane segment at 11-31 threads the bilayer; it reads VVLVTVAQLVLKWGMMNIPLL. Topologically, residues 32–47 are periplasmic; sequence SLADINVQFLTMYFVQ. A helical membrane pass occupies residues 48–68; it reads LASVMCGLMGYALSMLCWFFA. Residues 69–77 are Cytoplasmic-facing; sequence LRYLPLNRA. Residues 78–98 traverse the membrane as a helical segment; sequence YPLLSLSYALVYLGAVLLPWF. Residues 99 to 101 are Periplasmic-facing; that stretch reads NEP. A helical transmembrane segment spans residues 102–122; the sequence is ATLLKTLGAGFILLGIWLINI. Residues 123–128 lie on the Cytoplasmic side of the membrane; it reads KPIKAS.

It belongs to the ArnF family. As to quaternary structure, heterodimer of ArnE and ArnF.

It localises to the cell inner membrane. It functions in the pathway bacterial outer membrane biogenesis; lipopolysaccharide biosynthesis. Its function is as follows. Translocates 4-amino-4-deoxy-L-arabinose-phosphoundecaprenol (alpha-L-Ara4N-phosphoundecaprenol) from the cytoplasmic to the periplasmic side of the inner membrane. This chain is Probable 4-amino-4-deoxy-L-arabinose-phosphoundecaprenol flippase subunit ArnF, found in Yersinia pseudotuberculosis serotype O:1b (strain IP 31758).